The primary structure comprises 63 residues: 2-hydroxymuconate tautomerase (63 aa).

The active-site Proton acceptor; via imino nitrogen is the Pro-2.

It belongs to the 4-oxalocrotonate tautomerase family. As to quaternary structure, homohexamer.

The catalysed reaction is (2Z,4E)-2-hydroxyhexa-2,4-dienedioate = (3E)-2-oxohex-3-enedioate. The protein operates within aromatic compound metabolism; salicylate degradation. Its function is as follows. Catalyzes the ketonization of 2-hydroxymuconate stereoselectively to yield 2-oxo-3-hexenedioate. This chain is 2-hydroxymuconate tautomerase (tdnL), found in Pseudomonas putida (Arthrobacter siderocapsulatus).